The chain runs to 372 residues: N-methyl-L-tryptophan oxidase (372 aa).

4-34 (DLIIIGSGSVGAAAGYYATRAGLNVLMTDAH) lines the FAD pocket. C308 is modified (S-8alpha-FAD cysteine).

It belongs to the MSOX/MTOX family. MTOX subfamily. In terms of assembly, monomer. The cofactor is FAD.

The catalysed reaction is N(alpha)-methyl-L-tryptophan + O2 + H2O = L-tryptophan + formaldehyde + H2O2. Its function is as follows. Catalyzes the oxidative demethylation of N-methyl-L-tryptophan. The chain is N-methyl-L-tryptophan oxidase from Escherichia coli (strain K12 / DH10B).